We begin with the raw amino-acid sequence, 233 residues long: DNA repair protein RecO (233 aa).

Belongs to the RecO family.

Functionally, involved in DNA repair and RecF pathway recombination. The polypeptide is DNA repair protein RecO (Psychromonas ingrahamii (strain DSM 17664 / CCUG 51855 / 37)).